A 262-amino-acid chain; its full sequence is Large ribosomal subunit protein eL8B (262 aa).

The tract at residues 1-36 is disordered; the sequence is MAPKGKKVAPAPLATKSAKSSESKNPLFESTPKNFG.

Belongs to the eukaryotic ribosomal protein eL8 family. In terms of assembly, component of the large ribosomal subunit. Mature ribosomes consist of a small (40S) and a large (60S) subunit. The 40S subunit contains about 32 different proteins and 1 molecule of RNA (18S). The 60S subunit contains 45 different proteins and 3 molecules of RNA (25S, 5.8S and 5S).

The protein localises to the cytoplasm. In terms of biological role, component of the ribosome, a large ribonucleoprotein complex responsible for the synthesis of proteins in the cell. The small ribosomal subunit (SSU) binds messenger RNAs (mRNAs) and translates the encoded message by selecting cognate aminoacyl-transfer RNA (tRNA) molecules. The large subunit (LSU) contains the ribosomal catalytic site termed the peptidyl transferase center (PTC), which catalyzes the formation of peptide bonds, thereby polymerizing the amino acids delivered by tRNAs into a polypeptide chain. The nascent polypeptides leave the ribosome through a tunnel in the LSU and interact with protein factors that function in enzymatic processing, targeting, and the membrane insertion of nascent chains at the exit of the ribosomal tunnel. This is Large ribosomal subunit protein eL8B from Candida albicans (strain SC5314 / ATCC MYA-2876) (Yeast).